The following is a 732-amino-acid chain: uncharacterized protein (732 aa).

Transmembrane regions (helical) follow at residues 687–707 (YLFP…GSDL) and 712–732 (GVKV…YYTS).

Belongs to the FadG family.

It is found in the cell membrane. This is an uncharacterized protein from Bacillus subtilis (strain 168).